The primary structure comprises 384 residues: Small ribosomal subunit protein mS31 (384 aa).

Residues 1 to 54 (MLHRIPAFLRPRPFSGLPLSCGNRDVSVAVLPAAQSGAVRTENNIQRHFCTSRS) constitute a mitochondrion transit peptide. A disordered region spans residues 101–136 (TANVKTPKPRGRKPSASLEATVDRLQKAPEDPPKKR). The segment covering 121-136 (TVDRLQKAPEDPPKKR) has biased composition (basic and acidic residues).

The protein belongs to the mitochondrion-specific ribosomal protein mS31 family. Component of the mitochondrial ribosome small subunit (28S) which comprises a 12S rRNA and about 30 distinct proteins.

The protein localises to the mitochondrion. The polypeptide is Small ribosomal subunit protein mS31 (Mrps31) (Mus musculus (Mouse)).